The primary structure comprises 284 residues: UDP-N-acetylenolpyruvoylglucosamine reductase (284 aa).

The 163-residue stretch at 12 to 174 folds into the FAD-binding PCMH-type domain; the sequence is KIGGRVKYLV…TRVMMSFKRE (163 aa). Arginine 153 is an active-site residue. Catalysis depends on serine 203, which acts as the Proton donor. The active site involves glutamate 274.

The protein belongs to the MurB family. It depends on FAD as a cofactor.

Its subcellular location is the cytoplasm. The catalysed reaction is UDP-N-acetyl-alpha-D-muramate + NADP(+) = UDP-N-acetyl-3-O-(1-carboxyvinyl)-alpha-D-glucosamine + NADPH + H(+). The protein operates within cell wall biogenesis; peptidoglycan biosynthesis. Cell wall formation. The sequence is that of UDP-N-acetylenolpyruvoylglucosamine reductase from Thermotoga petrophila (strain ATCC BAA-488 / DSM 13995 / JCM 10881 / RKU-1).